Reading from the N-terminus, the 286-residue chain is uncharacterized protein (286 aa).

The helical transmembrane segment at 8–28 (PLSGFISSLIWWLLFFYLIMA) threads the bilayer.

The protein to M.jannaschii MJ1495.

The protein localises to the membrane. This is an uncharacterized protein from Methanocaldococcus jannaschii (strain ATCC 43067 / DSM 2661 / JAL-1 / JCM 10045 / NBRC 100440) (Methanococcus jannaschii).